The following is a 433-amino-acid chain: Ectonucleoside triphosphate diphosphohydrolase 5 (433 aa).

The N-terminal stretch at 1 to 24 (MATTWGAAFFMLVASCVCSTVFHR) is a signal peptide. Glutamate 172 (proton acceptor) is an active-site residue. The N-linked (GlcNAc...) asparagine glycan is linked to asparagine 232. 2 disulfide bridges follow: cysteine 272–cysteine 308 and cysteine 368–cysteine 382.

It belongs to the GDA1/CD39 NTPase family. Monomer; active form. Homodimer; disulfide-linked. Homodimers are enzymatically inactive. Ca(2+) is required as a cofactor. Mg(2+) serves as cofactor. In terms of processing, N-glycosylated; high-mannose type.

The protein localises to the endoplasmic reticulum. It is found in the secreted. It catalyses the reaction a ribonucleoside 5'-diphosphate + H2O = a ribonucleoside 5'-phosphate + phosphate + H(+). It carries out the reaction GDP + H2O = GMP + phosphate + H(+). The catalysed reaction is UDP + H2O = UMP + phosphate + H(+). The enzyme catalyses IDP + H2O = IMP + phosphate + H(+). It catalyses the reaction CDP + H2O = CMP + phosphate + H(+). It carries out the reaction ADP + H2O = AMP + phosphate + H(+). The protein operates within protein modification; protein glycosylation. In terms of biological role, hydrolyzes nucleoside diphosphates with a preference for GDP, IDP and UDP compared to ADP and CDP. In the lumen of the endoplasmic reticulum, hydrolyzes UDP that acts as an end-product feedback inhibitor of the UDP-Glc:glycoprotein glucosyltransferases. UMP can be transported back by an UDP-sugar antiporter to the cytosol where it is consumed to regenerate UDP-glucose. Therefore, it positively regulates protein reglucosylation by clearing UDP from the ER lumen and by promoting the regeneration of UDP-glucose. Protein reglucosylation is essential to proper glycoprotein folding and quality control in the ER. This is Ectonucleoside triphosphate diphosphohydrolase 5 (ENTPD5) from Ailuropoda melanoleuca (Giant panda).